We begin with the raw amino-acid sequence, 29 residues long: Cytochrome b6-f complex subunit 8 (29 aa).

A helical membrane pass occupies residues 3–23 (ILALGWVSVLALFTWSIAMVV).

Belongs to the PetN family. The 4 large subunits of the cytochrome b6-f complex are cytochrome b6, subunit IV (17 kDa polypeptide, PetD), cytochrome f and the Rieske protein, while the 4 small subunits are PetG, PetL, PetM and PetN. The complex functions as a dimer.

The protein localises to the cellular thylakoid membrane. In terms of biological role, component of the cytochrome b6-f complex, which mediates electron transfer between photosystem II (PSII) and photosystem I (PSI), cyclic electron flow around PSI, and state transitions. The chain is Cytochrome b6-f complex subunit 8 from Gloeothece citriformis (strain PCC 7424) (Cyanothece sp. (strain PCC 7424)).